A 106-amino-acid chain; its full sequence is ATP-dependent Clp protease adapter protein ClpS (106 aa).

Belongs to the ClpS family. Binds to the N-terminal domain of the chaperone ClpA.

Its function is as follows. Involved in the modulation of the specificity of the ClpAP-mediated ATP-dependent protein degradation. This chain is ATP-dependent Clp protease adapter protein ClpS, found in Yersinia enterocolitica serotype O:8 / biotype 1B (strain NCTC 13174 / 8081).